Consider the following 152-residue polypeptide: Putative pre-16S rRNA nuclease (152 aa).

It belongs to the YqgF nuclease family.

The protein resides in the cytoplasm. Functionally, could be a nuclease involved in processing of the 5'-end of pre-16S rRNA. This chain is Putative pre-16S rRNA nuclease, found in Sphingopyxis alaskensis (strain DSM 13593 / LMG 18877 / RB2256) (Sphingomonas alaskensis).